The primary structure comprises 514 residues: MKRILFTAGGCLFYLLLAVKAYAYDCSATPAYQDGVNYQSGDLVSNTGAAYRCNVAGWCSTGGAYAPGTGWAWTEAWDELGSCDGGAGSSGSSSSSSSSSSSSSGSSSSSSGSGSSSGGTSCDGIEAWQVASIYTEGNVVQQNGERYIANWWNQGQSPEDNSGAYEVWSAAGSCSGAGSSSSSSGGTSSSGSSSSGVSSSGGSSGGDSPIARHGKLHVCGNGLCNADNVPVQLRGMSTHGLQWYGWGNCITGNSLDTLAEDWNADILRVSLYVQEGGYETDPAGYTAQVSHIIDEVTARGMYVLVDWHQLDPGDPNANLDNARQFFTDIAQAHGDKTNIIYDVANEPNNVSWDAIQRYAMEVIPVIRQYAPDAVVLVGTHGWASLGISDGGSAQDIFNNPVTIDNIMYTFHFYAASHGQVYRDELRSALERGMPVFVTEWGSQTYTGDDGNDFVSTQAYLDLLDQYQISWTNWNYSDDFRTGAVWNTGTCSADSWGVGNLKEAGAWVRDKIRNR.

A signal peptide spans 1–23 (MKRILFTAGGCLFYLLLAVKAYA). 2 stretches are compositionally biased toward low complexity: residues 91 to 114 (GSSSSSSSSSSSSSGSSSSSSGSG) and 179 to 201 (SSSSSSGGTSSSGSSSSGVSSSG). Disordered regions lie at residues 91-118 (GSSSSSSSSSSSSSGSSSSSSGSGSSSG) and 179-208 (SSSSSSGGTSSSGSSSSGVSSSGGSSGGDS). Catalysis depends on Glu-346, which acts as the Proton donor. The active-site Nucleophile is Glu-439.

Belongs to the glycosyl hydrolase 5 (cellulase A) family.

It catalyses the reaction Endohydrolysis of (1-&gt;4)-beta-D-glucosidic linkages in cellulose, lichenin and cereal beta-D-glucans.. With respect to regulation, exhibits strong halostability and halotolerance. The activity increases about tenfold in the presence of 0.5 M NaCl, and about fivefold in the presence of 4.0 M NaCl. Tolerates detergents, but activity is decreased in the presence of EDTA. Activity is enhanced in the presence of Mn(2+), Ca(2+), Ba(2+) or Mg(2+), and decreased in the presence of Zn(2+), Cu(2+), Al(3+) or Fe(3+). Its function is as follows. Endoglucanase that exhibits highest activity toward barley beta-glucan, lower activity toward carboxymethyl cellulose (CMC-Na), and marginal activity toward laminarin and xylan. This chain is Endoglucanase MaCel5A, found in Microbulbifer sp. (strain ALW1).